Consider the following 340-residue polypeptide: Phosphate acyltransferase (340 aa).

Belongs to the PlsX family. Homodimer. Probably interacts with PlsY.

Its subcellular location is the cytoplasm. It carries out the reaction a fatty acyl-[ACP] + phosphate = an acyl phosphate + holo-[ACP]. Its pathway is lipid metabolism; phospholipid metabolism. In terms of biological role, catalyzes the reversible formation of acyl-phosphate (acyl-PO(4)) from acyl-[acyl-carrier-protein] (acyl-ACP). This enzyme utilizes acyl-ACP as fatty acyl donor, but not acyl-CoA. This Pseudomonas savastanoi pv. phaseolicola (strain 1448A / Race 6) (Pseudomonas syringae pv. phaseolicola (strain 1448A / Race 6)) protein is Phosphate acyltransferase.